Reading from the N-terminus, the 960-residue chain is Gamma-aminobutyric acid type B receptor subunit 1 (960 aa).

A signal peptide spans 1–19; that stretch reads MLLLLLVPLFLRPLGAGGA. Residues 20–590 are Extracellular-facing; it reads QTPNATSEGC…KTFRFLSQKL (571 aa). 2 N-linked (GlcNAc...) asparagine glycosylation sites follow: Asn-23 and Asn-83. Sushi domains follow at residues 29–95 and 97–158; these read CQII…PSRC and RICS…HCQV. Intrachain disulfides connect Cys-99–Cys-144, Cys-130–Cys-156, and Cys-219–Cys-245. 4-aminobutanoate is bound by residues Ser-246, Ser-269, His-286, and Tyr-366. A disulfide bridge links Cys-375 with Cys-409. N-linked (GlcNAc...) asparagine glycosylation is found at Asn-408 and Asn-439. Glu-465 contributes to the 4-aminobutanoate binding site. N-linked (GlcNAc...) asparagine glycosylation is found at Asn-481, Asn-501, and Asn-513. The helical transmembrane segment at 591–611 threads the bilayer; that stretch reads FISVSVLSSLGIVLAVVCLSF. Residues 612-630 are Cytoplasmic-facing; it reads NIYNSHVRYIQNSQPNLNN. Residues 631–651 traverse the membrane as a helical segment; it reads LTAVGCSLALAAVFPLGLDGY. Topologically, residues 652–666 are extracellular; it reads HIGRSQFPFVCQARL. Residues 667–687 form a helical membrane-spanning segment; that stretch reads WLLGLGFSLGYGSMFTKIWWV. Over 688-709 the chain is Cytoplasmic; sequence HTVFTKKEEKKEWRKTLEPWKL. Residues 710 to 730 form a helical membrane-spanning segment; sequence YATVGLLVGMDVLTLAIWQIV. Over 731 to 767 the chain is Extracellular; sequence DPLHRTIETFAKEEPKEDIDVSILPQLEHCSSKKMNT. A helical membrane pass occupies residues 768-788; sequence WLGIFYGYKGLLLLLGIFLAY. The Cytoplasmic segment spans residues 789–803; it reads ETKSVSTEKINDHRA. A helical membrane pass occupies residues 804–824; sequence VGMAIYNVAVLCLITAPVTMI. Topologically, residues 825 to 832 are extracellular; sequence LSSQQDAA. The chain crosses the membrane as a helical span at residues 833-853; the sequence is FAFASLAIVFSSYITLVVLFV. The Cytoplasmic portion of the chain corresponds to 854-960; that stretch reads PKMRRLITRG…DGSRVHLLYK (107 aa). Residues 866 to 879 show a composition bias toward polar residues; the sequence is QSETQDTMKTGSST. 2 disordered regions span residues 866–891 and 908–960; these read QSETQDTMKTGSSTNNNEEEKSRLLE and VSEL…LLYK. The stretch at 870 to 924 forms a coiled coil; sequence QDTMKTGSSTNNNEEEKSRLLEKENRELEKIIAEKEERVSELRHQLQSRQQLRSR. Thr-872 is subject to Phosphothreonine. Residues 887–915 are interaction with ATF4; that stretch reads SRLLEKENRELEKIIAEKEERVSELRHQL. A Phosphothreonine modification is found at Thr-929.

Belongs to the G-protein coupled receptor 3 family. GABA-B receptor subfamily. Heterodimer of GABBR1 and GABBR2. Homodimers may form, but are inactive. Interacts (via C-terminus) with ATF4 (via leucine zipper domain). Interacts with JAKMIP1. As to expression, ubiquitously expressed in tissues including the forebrain, cerebellum, eye, atrium, ventricle, lung, stomach, small intestine, colon, liver, spleen, kidney, urinary bladder and skeletal muscle. Expressed at low levels in testis, and more highly in brain regions. Expression is high the brain regions including cerebral cortical layers, with higher expression in VIb than in the II-V layers, pyramidal CA1-CA3 cell layers and granular cell layers of the hippocampus, granular cell layers of the dentate gyrus, including the caudate, putamen, nucleus accumbens and olfactory tubercle, the granular layer cell layers of the medial habenula, in the cerebellum, predominantly in Purkinje cells, and in the granule cell layer. Also expressed in areas of the brain including the medial geniculate nucleus, substantia nigra, pars compacta, the ventral tegmental area, and in several thalamic, amygdaloid and hypothalamic nuclei, such as the arcuate nucleus of the hypothalamus and mammilary bodies of the hypothalamus. Expressed in the amacrine cell of the retina. In terms of tissue distribution, expressed in the brain, spinal cord, stomach, testis, adrenal gland, pituitary, spleen and prostate. Expressed in the brain, spinal cord, stomach, testis, kidney and liver. As to expression, ubiquitously expressed. In terms of tissue distribution, expressed in the forebrain, cerebellum, eye, kidney and urinary bladder. Ubiquitously expressed with high expression in the pyramidal CA1-CA3 cell layers of the hippocampus, the granule cell layers of the dentate gyrus and olfactory tubercle, the whole cortex, and Purkinje cells of the cerebellum. Moderate expression in the granule cell layer of the cerebellum.

It is found in the cell membrane. The protein localises to the postsynaptic cell membrane. The protein resides in the cell projection. It localises to the dendrite. Its subcellular location is the perikaryon. Functionally, component of a heterodimeric G-protein coupled receptor for GABA, formed by GABBR1 and GABBR2. Within the heterodimeric GABA receptor, only GABBR1 seems to bind agonists, while GABBR2 mediates coupling to G proteins. Ligand binding causes a conformation change that triggers signaling via guanine nucleotide-binding proteins (G proteins) and modulates the activity of down-stream effectors, such as adenylate cyclase. Signaling inhibits adenylate cyclase, stimulates phospholipase A2, activates potassium channels, inactivates voltage-dependent calcium-channels and modulates inositol phospholipid hydrolysis. Calcium is required for high affinity binding to GABA. Plays a critical role in the fine-tuning of inhibitory synaptic transmission. Pre-synaptic GABA receptor inhibits neurotransmitter release by down-regulating high-voltage activated calcium channels, whereas postsynaptic GABA receptor decreases neuronal excitability by activating a prominent inwardly rectifying potassium (Kir) conductance that underlies the late inhibitory postsynaptic potentials. Not only implicated in synaptic inhibition but also in hippocampal long-term potentiation, slow wave sleep, muscle relaxation and antinociception. In Rattus norvegicus (Rat), this protein is Gamma-aminobutyric acid type B receptor subunit 1 (Gabbr1).